The chain runs to 391 residues: Glycerol-3-phosphate dehydrogenase [NAD(+)] 1 (391 aa).

Residues 41–46 (GSGNWG), phenylalanine 129, lysine 152, and alanine 185 each bind NAD(+). Residue lysine 152 participates in substrate binding. The Proton acceptor role is filled by lysine 245. Residues arginine 310 and glutamine 339 each coordinate NAD(+). 310-311 (RN) is a substrate binding site.

This sequence belongs to the NAD-dependent glycerol-3-phosphate dehydrogenase family.

It is found in the cytoplasm. The catalysed reaction is sn-glycerol 3-phosphate + NAD(+) = dihydroxyacetone phosphate + NADH + H(+). The polypeptide is Glycerol-3-phosphate dehydrogenase [NAD(+)] 1 (GPD1) (Saccharomyces uvarum (Yeast)).